A 665-amino-acid chain; its full sequence is PR5-like receptor kinase (665 aa).

The N-terminal stretch at 1-24 is a signal peptide; that stretch reads MVEGFSLSLMFLLVSHFFVSGVMS. Residues 25–276 lie on the Extracellular side of the membrane; sequence RNFTIENKCD…TKQKSSWKLK (252 aa). N-linked (GlcNAc...) asparagine glycosylation is found at Asn26 and Asn88. Disulfide bonds link Cys33-Cys249, Cys81-Cys91, Cys96-Cys103, Cys153-Cys238, Cys158-Cys221, Cys166-Cys184, Cys188-Cys197, and Cys198-Cys208. Asn163 carries N-linked (GlcNAc...) asparagine glycosylation. Asn233 is a glycosylation site (N-linked (GlcNAc...) asparagine). The chain crosses the membrane as a helical span at residues 277–297; sequence LIVGVSAALTLMILIVVVIIV. At 298–665 the chain is on the cytoplasmic side; the sequence is RTKNMRNSEW…DVLQHGSRSS (368 aa). The Protein kinase domain occupies 331–620; it reads NSFAHVLGKG…ALQVPPNPLL (290 aa). ATP contacts are provided by residues 337–345 and Lys360; that span reads LGKGGFGTV. Asp455 (proton acceptor) is an active-site residue.

In the N-terminal section; belongs to the thaumatin family. It in the C-terminal section; belongs to the protein kinase superfamily. Ser/Thr protein kinase family. Autophosphorylated in vitro. In terms of tissue distribution, expressed in roots. Expressed at low levels in stems.

Its subcellular location is the membrane. The enzyme catalyses L-seryl-[protein] + ATP = O-phospho-L-seryl-[protein] + ADP + H(+). It catalyses the reaction L-threonyl-[protein] + ATP = O-phospho-L-threonyl-[protein] + ADP + H(+). Its function is as follows. Possesses kinase activity in vitro. This Arabidopsis thaliana (Mouse-ear cress) protein is PR5-like receptor kinase.